Reading from the N-terminus, the 449-residue chain is Streptomycin-6-phosphate phosphatase (449 aa).

The signal sequence occupies residues 1-32 (MRFAYGRLPWRRGAVLGSALLVLVTAPAASTA). Aspartate 50 is a Mg(2+) binding site. Aspartate 50 lines the Zn(2+) pocket. The Phosphoserine intermediate role is filled by serine 99. Positions 151 and 153 each coordinate Mg(2+). The interval 268-290 (APGGTAPQRCATRNPGRPAGTPD) is disordered. Glutamate 321 serves as a coordination point for Mg(2+). Zn(2+) contacts are provided by aspartate 326, histidine 330, aspartate 368, histidine 369, and histidine 412.

It belongs to the alkaline phosphatase family. The cofactor is Mg(2+). Zn(2+) is required as a cofactor.

It is found in the secreted. It carries out the reaction streptomycin 6-phosphate + H2O = streptomycin + phosphate. The protein operates within antibiotic biosynthesis; streptomycin biosynthesis. Specifically cleaves both streptomycin-6-phosphate and, more slowly, streptomycin-3''-phosphate during the biosynthesis of streptomycin. This is Streptomycin-6-phosphate phosphatase (strK) from Streptomyces griseus.